Consider the following 377-residue polypeptide: 3-dehydroquinate synthase (377 aa).

NAD(+) is bound by residues 113–117 (GVIGD), 137–138 (TT), K150, and K159. Zn(2+) is bound by residues E192, H254, and H273.

Belongs to the sugar phosphate cyclases superfamily. Dehydroquinate synthase family. Co(2+) serves as cofactor. Zn(2+) is required as a cofactor. Requires NAD(+) as cofactor.

The protein resides in the cytoplasm. It carries out the reaction 7-phospho-2-dehydro-3-deoxy-D-arabino-heptonate = 3-dehydroquinate + phosphate. Its pathway is metabolic intermediate biosynthesis; chorismate biosynthesis; chorismate from D-erythrose 4-phosphate and phosphoenolpyruvate: step 2/7. Catalyzes the conversion of 3-deoxy-D-arabino-heptulosonate 7-phosphate (DAHP) to dehydroquinate (DHQ). This chain is 3-dehydroquinate synthase, found in Bartonella bacilliformis (strain ATCC 35685 / KC583 / Herrer 020/F12,63).